Here is a 571-residue protein sequence, read N- to C-terminus: Kinesin light chain (571 aa).

A coiled-coil region spans residues leucine 54–methionine 160. Over residues glutamate 167–glutamate 177 the composition is skewed to basic and acidic residues. Positions glutamate 167–alanine 210 are disordered. 6 TPR repeats span residues leucine 220–threonine 253, alanine 262–threonine 295, alanine 304–valine 337, alanine 346–glutamate 379, alanine 388–lysine 421, and threonine 471–alanine 504. Residues glycine 518–glutamine 571 are disordered. Composition is skewed to basic and acidic residues over residues serine 526–methionine 544 and lysine 551–lysine 562.

This sequence belongs to the kinesin light chain family. In terms of assembly, oligomeric complex composed of two heavy chains and two light chains.

Its subcellular location is the cytoplasm. It is found in the cytoskeleton. Kinesin is a microtubule-associated force-producing protein that may play a role in organelle transport. The light chain may function in coupling of cargo to the heavy chain or in the modulation of its ATPase activity. The chain is Kinesin light chain from Doryteuthis pealeii (Longfin inshore squid).